An 874-amino-acid polypeptide reads, in one-letter code: Trimodular acetylaranotin synthesis protein ataIMG (874 aa).

The tract at residues 1–339 (MANLSGLSNR…DSGLLRASSI (339 aa)) is aminotransferase ataI. The interval 20 to 39 (RFGFQTTQQAKPTESSKTPI) is disordered. Over residues 23 to 37 (FQTTQQAKPTESSKT) the composition is skewed to polar residues. An O-methyltransferase ataM region spans residues 340 to 668 (SYNSMVKGSS…QERTEAEWRT (329 aa)). S-adenosyl-L-methionine is bound at residue D625. Residues 669–874 (LAGRTGWEIR…VMEMGPQIGH (206 aa)) form a glutathione S-transferase ataG region. In terms of domain architecture, GST N-terminal spans 699-766 (KPLILAHELE…YLADRFDDGT (68 aa)). The 136-residue stretch at 739–874 (DPETKAEVIV…VMEMGPQIGH (136 aa)) folds into the GST C-terminal domain.

In the N-terminal section; belongs to the class-I pyridoxal-phosphate-dependent aminotransferase family. It in the 2nd section; belongs to the class I-like SAM-binding methyltransferase superfamily. Cation-independent O-methyltransferase family. The protein in the C-terminal section; belongs to the GST superfamily. The cofactor is pyridoxal 5'-phosphate.

The enzyme catalyses RX + glutathione = an S-substituted glutathione + a halide anion + H(+). Its pathway is mycotoxin biosynthesis. Trimodular acetylaranotin synthesis protein; part of the gene cluster that mediates the biosynthesis of acetylaranotin, a member of the epipolythiodioxopiperazine (ETP) class of toxins characterized by a disulfide-bridged cyclic dipeptide. The first step of acetylaranotin biosynthesis is performed by the NRPS ataP which produces diketopiperazine cyclo-L-Phe-L-Phe via the condensation of 2 phenylalanines (L-Phe). The ataC domain of ataTC then catalyzes the formation of bishydroxylation of cyclo-L-Phe-L-Phe. The glutathione S-transferase domain ataG in ataIMG further catalyzes the conjugation of two glutathiones to the bishydroxylated intermediate. Next, the dipeptidase ataJ removes the Glu residues. The following step is performed by the carbon sulfur lyase domain ataI of ataIMG which may convert the bis-cysteinyl adduct to yield an epidithiol intermediate. The ataT domain from ataTC then catalyzes the oxidation of the free dithiols, followed by a cyclization step catalyzed by the cytochrome P450 ataF. AtaF probably acts as an epoxidase to promote a dual epoxidation formation at C8 and C9 along with C8' and C9', followed by the spontaneous nucleophilic attack of the amide nitrogens N10 and N10' to yield an intermediate with the pyrrolidine partial structure. The final steps of acetylaranotin biosynthesis involve the acetylation and ring rearrangement of an epitetrathiodiketopiperazine intermediate to produce acetylaranotin. AtaH probably catalyzes the acetylation of epitetrathiodiketopiperazine to produce a diacetate and ataY is responsible for the formation of the dihydrooxepin moiety that converts the diacetate intermediate to acetylaranotin via acetylapoaranotin. Both enzymes could function independently in the absence of the other. The acetylaranotin bis-thiomethyltransferase ataS located outside of acetylaranotin gene cluster is the main thiomethyltransferase responsible for converting acetylaranotin and its related intermediates to their methylated forms. The polypeptide is Trimodular acetylaranotin synthesis protein ataIMG (Aspergillus terreus (strain NIH 2624 / FGSC A1156)).